Consider the following 589-residue polypeptide: Aspartate--tRNA ligase (589 aa).

L-aspartate is bound at residue E175. Residues 199–202 are aspartate; it reads QLFK. R221 is an L-aspartate binding site. Residues 221 to 223 and Q230 each bind ATP; that span reads RDE. Position 449 (H449) interacts with L-aspartate. An ATP-binding site is contributed by E483. Residue R490 participates in L-aspartate binding. Position 535 to 538 (535 to 538) interacts with ATP; sequence GLDR.

The protein belongs to the class-II aminoacyl-tRNA synthetase family. Type 1 subfamily. In terms of assembly, homodimer.

It is found in the cytoplasm. The catalysed reaction is tRNA(Asp) + L-aspartate + ATP = L-aspartyl-tRNA(Asp) + AMP + diphosphate. In terms of biological role, catalyzes the attachment of L-aspartate to tRNA(Asp) in a two-step reaction: L-aspartate is first activated by ATP to form Asp-AMP and then transferred to the acceptor end of tRNA(Asp). This Lysinibacillus sphaericus (strain C3-41) protein is Aspartate--tRNA ligase.